The primary structure comprises 245 residues: Ribosomal RNA small subunit methyltransferase G (245 aa).

S-adenosyl-L-methionine is bound by residues Gly-85, Phe-90, 108–110, 136–137, and Arg-155; these read DST and AE.

Belongs to the methyltransferase superfamily. RNA methyltransferase RsmG family.

The protein localises to the cytoplasm. In terms of biological role, specifically methylates the N7 position of a guanine in 16S rRNA. In Nostoc sp. (strain PCC 7120 / SAG 25.82 / UTEX 2576), this protein is Ribosomal RNA small subunit methyltransferase G.